Reading from the N-terminus, the 600-residue chain is NADH-quinone oxidoreductase subunit C/D (600 aa).

The tract at residues 1-190 (MVNNMTDLTA…DPFELTKAKQ (190 aa)) is NADH dehydrogenase I subunit C. Residues 214 to 600 (DFMFLNLGPN…IDFVMSDVDR (387 aa)) are NADH dehydrogenase I subunit D.

The protein in the N-terminal section; belongs to the complex I 30 kDa subunit family. It in the C-terminal section; belongs to the complex I 49 kDa subunit family. NDH-1 is composed of 13 different subunits. Subunits NuoB, CD, E, F, and G constitute the peripheral sector of the complex.

The protein localises to the cell inner membrane. The catalysed reaction is a quinone + NADH + 5 H(+)(in) = a quinol + NAD(+) + 4 H(+)(out). Its function is as follows. NDH-1 shuttles electrons from NADH, via FMN and iron-sulfur (Fe-S) centers, to quinones in the respiratory chain. The immediate electron acceptor for the enzyme in this species is believed to be ubiquinone. Couples the redox reaction to proton translocation (for every two electrons transferred, four hydrogen ions are translocated across the cytoplasmic membrane), and thus conserves the redox energy in a proton gradient. The chain is NADH-quinone oxidoreductase subunit C/D from Salmonella paratyphi A (strain ATCC 9150 / SARB42).